Here is a 145-residue protein sequence, read N- to C-terminus: Putative nickel-responsive regulator (145 aa).

Residues histidine 77, histidine 88, histidine 90, and cysteine 96 each contribute to the Ni(2+) site.

The protein belongs to the transcriptional regulatory CopG/NikR family. Ni(2+) serves as cofactor.

Functionally, transcriptional regulator. The protein is Putative nickel-responsive regulator of Rhizobium rhizogenes (strain K84 / ATCC BAA-868) (Agrobacterium radiobacter).